Here is a 346-residue protein sequence, read N- to C-terminus: S-adenosylmethionine:tRNA ribosyltransferase-isomerase (346 aa).

This sequence belongs to the QueA family. As to quaternary structure, monomer.

It is found in the cytoplasm. The enzyme catalyses 7-aminomethyl-7-carbaguanosine(34) in tRNA + S-adenosyl-L-methionine = epoxyqueuosine(34) in tRNA + adenine + L-methionine + 2 H(+). The protein operates within tRNA modification; tRNA-queuosine biosynthesis. Functionally, transfers and isomerizes the ribose moiety from AdoMet to the 7-aminomethyl group of 7-deazaguanine (preQ1-tRNA) to give epoxyqueuosine (oQ-tRNA). This is S-adenosylmethionine:tRNA ribosyltransferase-isomerase from Shewanella frigidimarina (strain NCIMB 400).